The primary structure comprises 378 residues: Putative methyltransferase spot-1 (378 aa).

This sequence belongs to the class IV-like SAM-binding methyltransferase superfamily.

Its subcellular location is the cytoplasm. The protein localises to the cytoskeleton. The protein resides in the spindle. It is found in the chromosome. It localises to the centromere. Its subcellular location is the kinetochore. The protein localises to the microtubule organizing center. The protein resides in the centrosome. In terms of biological role, required for association of the centrosomes with the poles of the bipolar mitotic spindle during metaphase. This is Putative methyltransferase spot-1 from Caenorhabditis elegans.